The chain runs to 890 residues: uncharacterized protein (890 aa).

An N-terminal signal peptide occupies residues 1–20 (MKILKSLVLLVLFMAMPAKA). Helical transmembrane passes span 518–538 (AALT…ALKL), 567–587 (TYFF…VVGA), 613–633 (LLFI…IITI), 651–671 (VIAF…IILM), 684–704 (ISTL…FLLI), and 775–795 (FLVL…SYGL). Residues 860-890 (KARKPEGGEHTNKFLAERNDVPKKEEGERKE) form a disordered region. Over residues 862–890 (RKPEGGEHTNKFLAERNDVPKKEEGERKE) the composition is skewed to basic and acidic residues.

Belongs to the TrbL/VirB6 family.

It is found in the cell membrane. This is an uncharacterized protein from Rickettsia felis (strain ATCC VR-1525 / URRWXCal2) (Rickettsia azadi).